Consider the following 326-residue polypeptide: Serine protease 38 (326 aa).

Positions 1-32 (MAAPASVMGPLGPSALGLLLLLLVVAPPRVAA) are cleaved as a signal peptide. The propeptide at 33-59 (LVHRQPENQGISLTGSVACGRPSMEGK) is activation peptide. The region spanning 60–293 (ILGGVPAPER…FSKWICDNIE (234 aa)) is the Peptidase S1 domain. Cysteine 85 and cysteine 101 are oxidised to a cystine. Residue histidine 100 is the Charge relay system of the active site. Asparagine 125 carries an N-linked (GlcNAc...) asparagine glycan. Residue aspartate 150 is the Charge relay system of the active site. Cystine bridges form between cysteine 183–cysteine 251, cysteine 214–cysteine 230, and cysteine 241–cysteine 269. Residue serine 245 is the Charge relay system of the active site.

The protein belongs to the peptidase S1 family.

The protein localises to the secreted. This Homo sapiens (Human) protein is Serine protease 38 (PRSS38).